The chain runs to 388 residues: Chorismate synthase (388 aa).

NADP(+)-binding residues include arginine 39 and arginine 45. The disordered stretch occupies residues 95-118 (EKNEKSRRVSRPRPGHADLVGGMK). FMN-binding positions include 130–132 (RSS), 251–252 (NA), glycine 296, 311–315 (KPIPT), and arginine 337.

The protein belongs to the chorismate synthase family. Homotetramer. It depends on FMNH2 as a cofactor.

The enzyme catalyses 5-O-(1-carboxyvinyl)-3-phosphoshikimate = chorismate + phosphate. It functions in the pathway metabolic intermediate biosynthesis; chorismate biosynthesis; chorismate from D-erythrose 4-phosphate and phosphoenolpyruvate: step 7/7. In terms of biological role, catalyzes the anti-1,4-elimination of the C-3 phosphate and the C-6 proR hydrogen from 5-enolpyruvylshikimate-3-phosphate (EPSP) to yield chorismate, which is the branch point compound that serves as the starting substrate for the three terminal pathways of aromatic amino acid biosynthesis. This reaction introduces a second double bond into the aromatic ring system. The polypeptide is Chorismate synthase (Listeria monocytogenes serotype 4b (strain CLIP80459)).